Here is a 441-residue protein sequence, read N- to C-terminus: 3-phosphoshikimate 1-carboxyvinyltransferase (441 aa).

The span at 1–10 shows a compositional bias: polar residues; sequence MSVTSTASSS. Residues 1–21 are disordered; that stretch reads MSVTSTASSSRELRAGGGLSG. Residues Lys29, Ser30, and Arg34 each coordinate 3-phosphoshikimate. Residue Lys29 participates in phosphoenolpyruvate binding. 2 residues coordinate phosphoenolpyruvate: Gly103 and Arg132. Ser177, Gln179, Asp328, and Lys355 together coordinate 3-phosphoshikimate. Phosphoenolpyruvate is bound at residue Gln179. The active-site Proton acceptor is the Asp328. Residues Arg359 and Arg401 each contribute to the phosphoenolpyruvate site.

Belongs to the EPSP synthase family. Monomer.

It localises to the cytoplasm. It catalyses the reaction 3-phosphoshikimate + phosphoenolpyruvate = 5-O-(1-carboxyvinyl)-3-phosphoshikimate + phosphate. Its pathway is metabolic intermediate biosynthesis; chorismate biosynthesis; chorismate from D-erythrose 4-phosphate and phosphoenolpyruvate: step 6/7. Its function is as follows. Catalyzes the transfer of the enolpyruvyl moiety of phosphoenolpyruvate (PEP) to the 5-hydroxyl of shikimate-3-phosphate (S3P) to produce enolpyruvyl shikimate-3-phosphate and inorganic phosphate. The chain is 3-phosphoshikimate 1-carboxyvinyltransferase from Prochlorococcus marinus (strain MIT 9303).